Reading from the N-terminus, the 66-residue chain is Large ribosomal subunit protein bL35 (66 aa).

The disordered stretch occupies residues 25–45 (QAAGKRHGMSKRPQKMKRNAR). Over residues 28-44 (GKRHGMSKRPQKMKRNA) the composition is skewed to basic residues.

This sequence belongs to the bacterial ribosomal protein bL35 family.

The sequence is that of Large ribosomal subunit protein bL35 from Rhodospirillum centenum (strain ATCC 51521 / SW).